The sequence spans 150 residues: UPF0178 protein ASA_3749 (150 aa).

Belongs to the UPF0178 family.

This Aeromonas salmonicida (strain A449) protein is UPF0178 protein ASA_3749.